The primary structure comprises 391 residues: Phosphoglycerate kinase (391 aa).

Substrate-binding positions include 21–23 (DLN), Arg-36, 59–62 (HLGR), Arg-113, and Arg-146. ATP is bound by residues Lys-197, Glu-319, and 345 to 348 (GGDT).

This sequence belongs to the phosphoglycerate kinase family. In terms of assembly, monomer.

The protein localises to the cytoplasm. The catalysed reaction is (2R)-3-phosphoglycerate + ATP = (2R)-3-phospho-glyceroyl phosphate + ADP. The protein operates within carbohydrate degradation; glycolysis; pyruvate from D-glyceraldehyde 3-phosphate: step 2/5. This Shewanella sp. (strain MR-7) protein is Phosphoglycerate kinase.